The chain runs to 317 residues: Zinc transporter ZIP3 (317 aa).

At Met-1–Lys-3 the chain is on the extracellular side. The chain crosses the membrane as a helical span at residues Leu-4 to Leu-24. At Leu-25–Lys-42 the chain is on the cytoplasmic side. Residues Val-43–Leu-63 traverse the membrane as a helical segment. The Extracellular segment spans residues Leu-64–Pro-85. Residues Leu-86–Leu-106 form a helical membrane-spanning segment. At Thr-107–Arg-172 the chain is on the cytoplasmic side. Ser-125 and Ser-129 each carry phosphoserine. The helical transmembrane segment at Leu-173–Leu-193 threads the bilayer. Over Gln-194 to Arg-199 the chain is Extracellular. The chain crosses the membrane as a helical span at residues Val-200–Ile-220. The Cytoplasmic portion of the chain corresponds to Ser-221 to Ala-232. The chain crosses the membrane as a helical span at residues Ala-233 to Ile-253. Residues Glu-254–Ser-265 lie on the Extracellular side of the membrane. Residues Ala-266 to Ala-286 form a helical membrane-spanning segment. At Lys-287–Glu-294 the chain is on the cytoplasmic side. The helical transmembrane segment at Gln-295–Leu-315 threads the bilayer. Residues Lys-316–Trp-317 are Extracellular-facing.

The protein belongs to the ZIP transporter (TC 2.A.5) family. In terms of tissue distribution, highly expressed in the testes. Highly expressed in dentate gyrus granule cells of the hippocampus. Expressed in the mammary gland.

The protein localises to the cell membrane. It is found in the apical cell membrane. The catalysed reaction is Zn(2+)(in) = Zn(2+)(out). In terms of biological role, transporter for the divalent cation Zn(2+). Mediates the influx of Zn(2+) into cells from extracellular space. Controls Zn(2+) accumulation into dentate gyrus granule cells in the hippocampus. Mediates Zn(2+) reuptake from the secreted milk within the alveolar lumen. The chain is Zinc transporter ZIP3 (Slc39a3) from Mus musculus (Mouse).